The primary structure comprises 355 residues: IGF-like family receptor 1 (355 aa).

Positions 1 to 22 are cleaved as a signal peptide; sequence MGPGRCLLTALLLLALAPPPEA. Residues 23–163 are Extracellular-facing; it reads SQYCGRLEYW…PQQAWPNFLP (141 aa). The interval 120–147 is disordered; that stretch reads KGHCPLTPGNPGAPSSQERSSPASSIAW. The span at 132 to 144 shows a compositional bias: low complexity; that stretch reads APSSQERSSPASS. Residues 164–184 traverse the membrane as a helical segment; that stretch reads LVVLVLLLTLAVIAILLFILL. The Cytoplasmic segment spans residues 185–355; that stretch reads WHLCWPKEKA…KLGSSGVCWA (171 aa).

Its subcellular location is the cell membrane. Probable cell membrane receptor for the IGF-like family proteins. Binds IGFL1 and IGFL3 with a higher affinity. May also bind IGFL2. The chain is IGF-like family receptor 1 (IGFLR1) from Homo sapiens (Human).